The chain runs to 398 residues: Circumsporozoite protein (398 aa).

Positions Met1–Gly23 are cleaved as a signal peptide. A disordered region spans residues Ala50–Ala110. Residues Pro66–Leu93 are compositionally biased toward basic and acidic residues. A required for the binding to heparan sulfate proteoglycans (HSPGs) on the surface of host hepatocytes region spans residues Lys81–Arg89. Positions Lys92–Pro96 are region I; contains the proteolytic cleavage site. Tandem repeats lie at residues Ala97 to Glu105, Ala106 to Glu114, Ala115 to Glu123, Ala124 to Glu132, Ala133 to Glu141, Ala142 to Glu150, Ala151 to Ala159, Ala160 to Glu168, Ala169 to Ala177, Ala178 to Glu186, Ala187 to Glu195, Ala196 to Glu204, Ala205 to Ala213, Ala214 to Glu222, Ala223 to Ala231, Ala232 to Ala240, Ala241 to Arg257, Ala258 to Arg274, and Ala275 to Gly291. Positions Ala97–Ala110 are enriched in low complexity. Residues Ala97–Ala240 form a 16 X 9 AA tandem repeats of A-G-N-N-A-A-[AG]-G-[EA] region. The segment at Ala241–Gly291 is 3 X 17 AA tandem repeats of A-G-N-N-A-A-A-G-E-A-G-A-G-G-A-G-[RG]. A disordered region spans residues Gly248 to Ala310. Residues Ala284–Ala293 show a composition bias toward gly residues. The TSP type-1 domain occupies Lys324–Ala376. 2 disulfides stabilise this stretch: Cys336–Cys370 and Cys340–Cys375. Residue Thr339 is glycosylated (O-linked (Fuc) threonine). A lipid anchor (GPI-anchor amidated cysteine) is attached at Cys375. A propeptide spans Ala376–Asn398 (removed in mature form).

This sequence belongs to the plasmodium circumsporozoite protein family. In terms of processing, during host cell invasion, proteolytically cleaved at the cell membrane in the region I by a papain-like cysteine protease of parasite origin. Cleavage is triggered by the sporozoite contact with highly sulfated heparan sulfate proteoglycans (HSPGs) present on the host hepatocyte cell surface. Cleavage exposes the TSP type-1 (TSR) domain and is required for productive invasion of host hepatocytes but not for adhesion to the host cell membrane. Cleavage is dispensable for sporozoite development in the oocyst, motility and for traversal of host and vector cells. Post-translationally, O-glycosylated; maybe by POFUT2.

It localises to the cell membrane. The protein resides in the cytoplasm. Its function is as follows. Essential sporozoite protein. In the mosquito vector, required for sporozoite development in the oocyst, migration through the vector hemolymph and entry into the vector salivary glands. In the vertebrate host, required for sporozoite migration through the host dermis and infection of host hepatocytes. Binds to highly sulfated heparan sulfate proteoglycans (HSPGs) on the surface of host hepatocytes. In the vertebrate host, binds to highly sulfated heparan sulfate proteoglycans (HSPGs) on the surface of host hepatocytes and is required for sporozoite invasion of the host hepatocytes. The chain is Circumsporozoite protein from Plasmodium cynomolgi (strain Ceylon).